The primary structure comprises 334 residues: HTH-type transcriptional repressor PurR (334 aa).

An HTH lacI-type domain is found at 2–56 (ATIKDVARLAGVSTTTVSHVINKTRFVAETTQEKVMKAVDELNYAPSAVARSLKC). The segment at residues 4–23 (IKDVARLAGVSTTTVSHVIN) is a DNA-binding region (H-T-H motif). The DNA-binding element occupies 48-56 (SAVARSLKC). Positions 73, 189, 220, and 274 each coordinate hypoxanthine.

Homodimer.

Its pathway is purine metabolism; purine nucleotide biosynthesis [regulation]. Its function is as follows. Is the main repressor of the genes involved in the de novo synthesis of purine nucleotides, regulating purB, purC, purEK, purF, purHD, purL, purMN and guaBA expression. PurR is allosterically activated to bind its cognate DNA by binding the purine corepressors, hypoxanthine or guanine, thereby effecting transcription repression. The chain is HTH-type transcriptional repressor PurR from Vibrio campbellii (strain ATCC BAA-1116).